Consider the following 705-residue polypeptide: Catalase C (705 aa).

The tract at residues 1 to 31 is disordered; the sequence is MAKKPSAPNNTKPATIHDQKATRGNGGELHQ. Residues histidine 88 and asparagine 161 contribute to the active site. Tyrosine 375 lines the heme pocket.

Belongs to the catalase family. HPII subfamily. Heme serves as cofactor.

It catalyses the reaction 2 H2O2 = O2 + 2 H2O. In terms of biological role, decomposes hydrogen peroxide into water and oxygen; serves to protect cells from the toxic effects of hydrogen peroxide. Could protect cells in nodules which have a high potential to produce hydrogen peroxide because of the strong reducing conditions required for nitrogen fixation and the action of several proteins. This chain is Catalase C (katE), found in Rhizobium meliloti (strain 1021) (Ensifer meliloti).